The chain runs to 457 residues: Transcription factor CP2-like protein 1 (457 aa).

The tract at residues 1 to 52 (MLFWHTQPEHYNQHNSGSYLRDVLALPIFKQEEPQLSPENEARLPPLQYVLC) is mediate transcriptional repression. Residues 43 to 280 (RLPPLQYVLC…PSPSYNGSPN (238 aa)) form the Grh/CP2 DB domain. Disordered regions lie at residues 219–245 (KPKG…KEKY) and 271–301 (PSPS…LPVG). Basic and acidic residues predominate over residues 221–245 (KGADRKQETDREKMEKRTAQEKEKY). Residues 261 to 365 (PDVAYQVNSA…IRLFNAIKGR (105 aa)) form an SAM2-like domain region. The span at 271–281 (PSPSYNGSPNS) shows a compositional bias: polar residues.

Belongs to the grh/CP2 family. CP2 subfamily. As to quaternary structure, forms homohexamers via its SAM-like domain. Interacts with MTA1; which is indispensable for TFCP2L1-mediated self-renewal-promoting effect and endoderm-inhibiting action.

It localises to the nucleus. Transcription factor that facilitates establishment and maintenance of pluripotency in embryonic stem cells (ESCs). With KLF2, acts as the major effector of self-renewal that mediates induction of pluripotency downstream of LIF/STAT3 and Wnt/beta-catenin signaling. Required for normal duct development in the salivary gland and kidney. Coordinates the development of the kidney collecting ducts intercalated (IC) and principal (PC) cells, which regulate acid-base and salt-water homeostasis, respectively. Regulates the expression of IC genes including subunits B1 and D2 of the V-ATPase complex, OXGR1, CA12, SLC4A1, AQP6 and IC-specific transcription factor FOXI1. Also regulates the expression of JAG1 and subsequent notch signaling in the collecting duct. JAG1 initiates notch signaling in PCs but inhibits notch signaling in ICs. Acts as a transcriptional suppressor that may suppress UBP1-mediated transcriptional activation. Modulates the placental expression of CYP11A1. The protein is Transcription factor CP2-like protein 1 (TFCP2L1) of Pongo abelii (Sumatran orangutan).